The chain runs to 100 residues: uncharacterized protein (100 aa).

This is an uncharacterized protein from Homo sapiens (Human).